We begin with the raw amino-acid sequence, 394 residues long: Succinate--CoA ligase [ADP-forming] subunit beta (394 aa).

ATP is bound by residues K46, 53–55, E99, C102, and E107; that span reads GRG. Positions 199 and 213 each coordinate Mg(2+). Substrate contacts are provided by residues N264 and 321–323; that span reads GIV.

Belongs to the succinate/malate CoA ligase beta subunit family. In terms of assembly, heterotetramer of two alpha and two beta subunits. Mg(2+) is required as a cofactor.

It carries out the reaction succinate + ATP + CoA = succinyl-CoA + ADP + phosphate. The catalysed reaction is GTP + succinate + CoA = succinyl-CoA + GDP + phosphate. The protein operates within carbohydrate metabolism; tricarboxylic acid cycle; succinate from succinyl-CoA (ligase route): step 1/1. In terms of biological role, succinyl-CoA synthetase functions in the citric acid cycle (TCA), coupling the hydrolysis of succinyl-CoA to the synthesis of either ATP or GTP and thus represents the only step of substrate-level phosphorylation in the TCA. The beta subunit provides nucleotide specificity of the enzyme and binds the substrate succinate, while the binding sites for coenzyme A and phosphate are found in the alpha subunit. The protein is Succinate--CoA ligase [ADP-forming] subunit beta of Haemophilus influenzae (strain PittGG).